A 203-amino-acid polypeptide reads, in one-letter code: GTP cyclohydrolase-2 (203 aa).

49 to 53 (RIHSE) contributes to the GTP binding site. 3 residues coordinate Zn(2+): C54, C65, and C67. GTP contacts are provided by residues Q70, 92–94 (EGR), and T114. Residue D126 is the Proton acceptor of the active site. R128 (nucleophile) is an active-site residue. The GTP site is built by T149 and K154.

This sequence belongs to the GTP cyclohydrolase II family. The cofactor is Zn(2+).

The catalysed reaction is GTP + 4 H2O = 2,5-diamino-6-hydroxy-4-(5-phosphoribosylamino)-pyrimidine + formate + 2 phosphate + 3 H(+). Its pathway is cofactor biosynthesis; riboflavin biosynthesis; 5-amino-6-(D-ribitylamino)uracil from GTP: step 1/4. In terms of biological role, catalyzes the conversion of GTP to 2,5-diamino-6-ribosylamino-4(3H)-pyrimidinone 5'-phosphate (DARP), formate and pyrophosphate. This chain is GTP cyclohydrolase-2, found in Shewanella sp. (strain W3-18-1).